Consider the following 548-residue polypeptide: MAAKDVKFGNDARVKMLRGVNVLADAVKVTLGPKGRNVVLDKSFGAPTITKDGVSVAREIELEDKFENMGAQMVKEVASKANDAAGDGTTTATVLAQSIVNEGLKAVAAGMNPMDLKRGIDKAVIAAVEELKKLSVPCSDSKAIAQVGTISANSDETVGELIALAMEKVGKEGVITVEEGTGLQDELDVVEGMQFDRGYLSPYFINKPETGAVELESPFILLADKKISNIRELLPVLEAVAKAGKPLLIVAEDVEGEALATLVVNTMRGIVKVAAVKAPGFGDRRKAMLQDIAVLTGGTVISEEIGMELEKAGLEDMGQAKRVVISKDTTTIIDGTGEEVAISGRVTQIRQQIEDATSDYDREKLQERVAKLAGGVAVLKVGAATEVEMKEKKARVEDALHATRAAVEEGVVAGGGVALVRVAAMLTELRGQNEDQNVGIKVALRAMESPLRQIVSNAGEEPSVVTNAVKAGEGNYGYNAQTEEYGNMIDFGILDPTKVTRSALQYAASVAGLMITTECMVTDLPKGDAPDLGAGGGMGGMGGMGGMM.

ATP is bound by residues 30-33, K51, 87-91, G415, and D495; these read TLGP and DGTTT.

Belongs to the chaperonin (HSP60) family. Forms a cylinder of 14 subunits composed of two heptameric rings stacked back-to-back. Interacts with the co-chaperonin GroES.

Its subcellular location is the cytoplasm. The enzyme catalyses ATP + H2O + a folded polypeptide = ADP + phosphate + an unfolded polypeptide.. Functionally, together with its co-chaperonin GroES, plays an essential role in assisting protein folding. The GroEL-GroES system forms a nano-cage that allows encapsulation of the non-native substrate proteins and provides a physical environment optimized to promote and accelerate protein folding. This chain is Chaperonin GroEL, found in Erwinia tasmaniensis (strain DSM 17950 / CFBP 7177 / CIP 109463 / NCPPB 4357 / Et1/99).